The primary structure comprises 463 residues: GTPase Der (463 aa).

The interval 1–20 (MDEGDEDLISGRGFTEGARK) is disordered. 2 consecutive EngA-type G domains span residues 27–190 (GVLA…KQAE) and 202–375 (RRVA…ESWD). GTP-binding positions include 33–40 (GRPNVGKS), 80–84 (DTGGW), 142–145 (NKID), 208–215 (GRPNVGKS), 255–259 (DTAGI), and 320–323 (NKWD). The KH-like domain occupies 376–458 (QRIPTGKLNA…PIQISVNIRE (83 aa)).

It belongs to the TRAFAC class TrmE-Era-EngA-EngB-Septin-like GTPase superfamily. EngA (Der) GTPase family. Associates with the 50S ribosomal subunit.

Functionally, GTPase that plays an essential role in the late steps of ribosome biogenesis. The sequence is that of GTPase Der from Bifidobacterium longum (strain NCC 2705).